Consider the following 900-residue polypeptide: Nonribosomal peptide synthetase AMT10 (900 aa).

Residues K284–R686 are adenylation. Residues E824–D900 form the Carrier domain. S861 is subject to O-(pantetheine 4'-phosphoryl)serine.

Belongs to the NRP synthetase family.

The protein operates within mycotoxin biosynthesis. Functionally, nonribosomal peptide synthetase; part of the gene clusters that mediate the biosynthesis of AM-toxins, host-selective toxins (HSTs) causing Alternaria blotch on apple, a worldwide distributed disease. AM-toxins are cyclic depsipeptides containing the 3 residues 2-hydroxy-isovaleric acid (2-HIV), dehydroalanine, L-alanine which are common for all 3 AM-toxins I to III. The fourth precursor is L-alpha-amino-methoxyphenyl-valeric acid (L-Amv) for AM-toxin I, L-alpha-amino-phenyl-valeric acid (L-Apv) for AM-toxin II, and L-alpha-amino-hydroxyphenyl-valeric acid (L-Ahv) for AM-toxin III. AM-toxins have two target sites for affecting susceptible apple cells; they cause invagination of the plasma membrane and electrolyte loss and chloroplast disorganization. The non-ribosomal peptide synthetase AMT1 contains 4 catalytic modules and is responsible for activation of each residue in AM-toxin. The aldo-keto reductase AMT2 catalyzes the conversion of 2-keto-isovaleric acid (2-KIV) to 2-hydroxy-isovaleric acid (2-HIV), one of the precursor residues incorporated by AMT1 during AM-toxin biosynthesis, by reduction of its ketone to an alcohol. The cytochrome P450 monooxygenase AMT3 and the thioesterase AMT4 are also important for AM-toxin production, but their exact function within the AM-toxin biosynthesis are not known yet. Up to 21 proteins (including AMT1 to AMT4) are predicted to be involved in AM-toxin biosynthesis since their expression ishighly up-regulated in AM-toxin-producing cultures. The polypeptide is Nonribosomal peptide synthetase AMT10 (Alternaria alternata (Alternaria rot fungus)).